We begin with the raw amino-acid sequence, 990 residues long: MSVTNSNRKRSLSEVSEGSDPEAPAKTRNSYTTDEIVMVEEVDSEIPVNISSYGDAETYLKWQNTIAKVVKSVVSIHFSQVAPFDSDNAVVSQATGFVVDASLGIILTNRHVVGPGPFVGYAVFDNHEECDVTPIYRDPVHDFGFLKFDPTKIKYMNIQALELKPSLAKVGSEIRVVGNDAGEKLSILSGFISRLDRNAPDYGELTYNDFNTEYIQAAAAASGGSSGSPVVNSDGYAVALQAGGSTEASTDFFLPLDRILRALKCLQSNKPITRGTIQLQWLLKPFDECRRLGLTADRESQARAQFPDKIGLLVAETILREGPSDIKIKEGDTLISINGELISSFIQVDDILDESIGKEIEIIIQRGGIEHTVKCEVGDLHSITPDRYVEVCGATFHELSYQMARFYGMPVRGVFISSASGSFNIDANERVGWIVDSIDNKETPNLDTFIEVMKTIPDRQRVTLRYHHLTDQHTIHVTSIYIDRHWCSEFRLYKRNDVTGIWDYENVAEPIKAEELKPHAAKFIDIPIDIPEIATLSHSLCMVSTVSAIPLDSLPVENVKTSGLVIDAEQGYIIVSRRAVPHDCLDVFVTFADSVMIPASIVFLHPTKNYAIIKYDINLVNANIITPKLSNTPMKRGDRTRFIGFTHNNRLVTSETSVTDISSISIPSNIIPRYRATNLEAISIDCNVSTKCNSGILTDNDGTIRALWLSFLGERQDNKDKIYLMSLDITDCKEVIELLKEGKKPKVSIIDAGFGAISILTARIRGVPEEWIKKMELQSENRLQFISVSRVSFTEEPVKLQTGDVILAVNDKLVTEMSQLDGVVSTADDEESQTLRFKVVREGKIIDLNIKTIYVKETSQIAVFSGSILQPPHHAVWQSMMNIPSGVYCTFRGESSPALQFGISATNFITHVNETETPDLDTFLKVIKQIPDNTYCKMRLMTFDNVPFAISLKTNYHYFPTTELKKNIESGKWIENELNKTEEKKIIKSD.

Positions 1 to 32 (MSVTNSNRKRSLSEVSEGSDPEAPAKTRNSYT) are disordered. The interval 73–263 (VVSIHFSQVA…LPLDRILRAL (191 aa)) is serine protease. Residues histidine 111, aspartate 142, and serine 225 each act as charge relay system in the active site. PDZ domains are found at residues 290–368 (RRLG…QRGG) and 758–843 (SILT…VREG).

The protein belongs to the peptidase S1C family.

Its subcellular location is the nucleus. Its function is as follows. Nuclear serine protease which mediates apoptosis. In Vanderwaltozyma polyspora (strain ATCC 22028 / DSM 70294 / BCRC 21397 / CBS 2163 / NBRC 10782 / NRRL Y-8283 / UCD 57-17) (Kluyveromyces polysporus), this protein is Pro-apoptotic serine protease NMA111 (NMA111).